Here is a 274-residue protein sequence, read N- to C-terminus: Bis(5'-nucleosyl)-tetraphosphatase, symmetrical (274 aa).

Belongs to the Ap4A hydrolase family.

The enzyme catalyses P(1),P(4)-bis(5'-adenosyl) tetraphosphate + H2O = 2 ADP + 2 H(+). Its function is as follows. Hydrolyzes diadenosine 5',5'''-P1,P4-tetraphosphate to yield ADP. The protein is Bis(5'-nucleosyl)-tetraphosphatase, symmetrical of Shewanella sp. (strain W3-18-1).